A 255-amino-acid chain; its full sequence is Protein patched homolog 2 (255 aa).

Topologically, residues 1-197 are extracellular; sequence SLLQGGSAYL…LNDIMKSFSD (197 aa). Asn147 and Asn175 each carry an N-linked (GlcNAc...) asparagine glycan. A helical transmembrane segment spans residues 198 to 218; the sequence is VSVIRVAGGYLLMLAYACVTM. Residues 199–255 enclose the SSD domain; sequence SVIRVAGGYLLMLAYACVTMLRWDCTKSQGAVGLAGVLLVALSVASGLGLCSLLGIS. At 219-227 the chain is on the cytoplasmic side; the sequence is LRWDCTKSQ. A helical membrane pass occupies residues 228–248; sequence GAVGLAGVLLVALSVASGLGL. Residues 249-255 are Extracellular-facing; sequence CSLLGIS.

Belongs to the patched family. In terms of tissue distribution, in the eye, detected in neural retina, iris, retinal pigment epithelium, but not in lens.

The protein localises to the membrane. May act as a receptor for sonic hedgehog (SHH). This Cynops pyrrhogaster (Japanese fire-bellied newt) protein is Protein patched homolog 2 (PTC2).